The sequence spans 38 residues: Large ribosomal subunit protein bL36A (38 aa).

This sequence belongs to the bacterial ribosomal protein bL36 family.

This Enterobacter sp. (strain 638) protein is Large ribosomal subunit protein bL36A.